The following is a 198-amino-acid chain: RxLR effector protein CRE4 (198 aa).

A signal peptide spans M1–P20. Positions R43 to R52 match the RxLR-dEER motif.

Belongs to the RxLR effector family.

The protein resides in the secreted. The protein localises to the host cytoplasm. It is found in the host nucleus. It localises to the host nucleolus. Functionally, effector that is involved in host plant infection. Contributes to virulence during the early infection stage, by inhibiting plant defense responses induced by both PAMP-triggered immunity (PTI) and effector-triggered immunity (ETI). This Phytophthora infestans (strain T30-4) (Potato late blight agent) protein is RxLR effector protein CRE4 (CRE4).